An 829-amino-acid polypeptide reads, in one-letter code: UBA domain-containing protein 8 (829 aa).

Residues 10-109 (EQQEFDRLLE…KQAKDDHHIK (100 aa)) enclose the EH 1 domain. The 36-residue stretch at 43-78 (LPQKILAKIWDYCDQEDKGSLDRNQVYACFRLISQA) folds into the EF-hand 1 domain. Residues 93–121 (GDPPILPKQAKDDHHIKRSSSETADFTPF) form a disordered region. Ser-112 and Ser-113 each carry phosphoserine. EH domains are found at residues 129–225 (ERSE…AKSE) and 300–398 (DRSN…SDDT). An EF-hand 2 domain is found at 333–368 (LDSEELARIWDTVDTQDRGYIDKDEFAVAMEIIKLR). Composition is skewed to polar residues over residues 466-506 (SFQD…TQSI) and 574-590 (TIPG…QTTE). 3 disordered regions span residues 466–520 (SFQD…VNSS), 574–614 (TIPG…MRKL), and 724–785 (KPQV…QSYE). A coiled-coil region spans residues 602–709 (EPTEEEQEEM…AKIDSIIADS (108 aa)). Positions 728–737 (TPAPPTPAPT) are enriched in pro residues. Residues 764 to 774 (HANSSTPMNYV) show a composition bias toward polar residues. Low complexity predominate over residues 775 to 785 (SQPESPPQSYE). One can recognise a UBA domain in the interval 788–828 (QNDNELLQELLSMGFPREKAVIALEATNYDVNEAANILLSS).

In Schizosaccharomyces pombe (strain 972 / ATCC 24843) (Fission yeast), this protein is UBA domain-containing protein 8 (ucp8).